Here is a 542-residue protein sequence, read N- to C-terminus: POTE ankyrin domain family member C (542 aa).

7 ANK repeats span residues Glu-138–Lys-171, Gln-172–Val-201, Lys-205–Ile-234, Tyr-238–Ser-267, Cys-271–Ala-300, Tyr-304–Ser-333, and Ser-337–Ser-373. The tract at residues Ser-369–Leu-494 is disordered. Basic and acidic residues-rich tracts occupy residues Gln-377–Val-392, Met-401–Asp-412, and Glu-466–Ser-481. The segment covering Glu-482–Leu-494 has biased composition (polar residues). Residues Ser-489 to Ser-538 are a coiled coil.

Belongs to the POTE family. In terms of tissue distribution, expressed in prostate and testis.

This is POTE ankyrin domain family member C (POTEC) from Homo sapiens (Human).